A 387-amino-acid polypeptide reads, in one-letter code: Alkanesulfonate monooxygenase (387 aa).

The protein belongs to the SsuD family.

It carries out the reaction an alkanesulfonate + FMNH2 + O2 = an aldehyde + FMN + sulfite + H2O + 2 H(+). Its function is as follows. Catalyzes the desulfonation of aliphatic sulfonates. The protein is Alkanesulfonate monooxygenase of Cupriavidus pinatubonensis (strain JMP 134 / LMG 1197) (Cupriavidus necator (strain JMP 134)).